Consider the following 737-residue polypeptide: Polyribonucleotide nucleotidyltransferase (737 aa).

Residues Asp489 and Asp495 each contribute to the Mg(2+) site. One can recognise a KH domain in the interval 556 to 615 (PKIDTIKIDVDKIKIVIGKGGETIDKIIAETGVKIDIDEEGNVSIYSSDQDAINRAKEII). Residues 625–693 (DEVYRAKVVR…EKGRIDASMK (69 aa)) form the S1 motif domain. Residues 691-737 (SMKALLPRPPKPEHDEKGEKSERPHRPRHQKDHKPKKEFTETPKDSE) are disordered. A compositionally biased stretch (basic and acidic residues) spans 700-714 (PKPEHDEKGEKSERP). Over residues 715 to 724 (HRPRHQKDHK) the composition is skewed to basic residues. Over residues 725–737 (PKKEFTETPKDSE) the composition is skewed to basic and acidic residues.

It belongs to the polyribonucleotide nucleotidyltransferase family. It depends on Mg(2+) as a cofactor.

It localises to the cytoplasm. The enzyme catalyses RNA(n+1) + phosphate = RNA(n) + a ribonucleoside 5'-diphosphate. Its function is as follows. Involved in mRNA degradation. Catalyzes the phosphorolysis of single-stranded polyribonucleotides processively in the 3'- to 5'-direction. The chain is Polyribonucleotide nucleotidyltransferase from Streptococcus pneumoniae (strain JJA).